The sequence spans 564 residues: Eukaryotic translation initiation factor 3 subunit L (564 aa).

The residue at position 2 (Ser2) is an N-acetylserine. The residue at position 21 (Ser21) is a Phosphoserine. The PCI domain occupies 331-537 (DAIRVFANIL…IHIADTKVAR (207 aa)). 2 positions are modified to N6-acetyllysine: Lys465 and Lys549.

As to quaternary structure, component of the eukaryotic translation initiation factor 3 (eIF-3) complex, which is composed of 13 subunits: EIF3A, EIF3B, EIF3C, EIF3D, EIF3E, EIF3F, EIF3G, EIF3H, EIF3I, EIF3J, EIF3K, EIF3L and EIF3M. The eIF-3 complex appears to include 3 stable modules: module A is composed of EIF3A, EIF3B, EIF3G and EIF3I; module B is composed of EIF3F, EIF3H, and EIF3M; and module C is composed of EIF3C, EIF3D, EIF3E, EIF3K and EIF3L. EIF3C of module C binds EIF3B of module A and EIF3H of module B, thereby linking the three modules. EIF3J is a labile subunit that binds to the eIF-3 complex via EIF3B. The eIF-3 complex interacts with RPS6KB1 under conditions of nutrient depletion. Mitogenic stimulation leads to binding and activation of a complex composed of MTOR and RPTOR, leading to phosphorylation and release of RPS6KB1 and binding of EIF4B to eIF-3. Interacts with RRN3.

It is found in the cytoplasm. In terms of biological role, component of the eukaryotic translation initiation factor 3 (eIF-3) complex, which is required for several steps in the initiation of protein synthesis. The eIF-3 complex associates with the 40S ribosome and facilitates the recruitment of eIF-1, eIF-1A, eIF-2:GTP:methionyl-tRNAi and eIF-5 to form the 43S pre-initiation complex (43S PIC). The eIF-3 complex stimulates mRNA recruitment to the 43S PIC and scanning of the mRNA for AUG recognition. The eIF-3 complex is also required for disassembly and recycling of post-termination ribosomal complexes and subsequently prevents premature joining of the 40S and 60S ribosomal subunits prior to initiation. The eIF-3 complex specifically targets and initiates translation of a subset of mRNAs involved in cell proliferation, including cell cycling, differentiation and apoptosis, and uses different modes of RNA stem-loop binding to exert either translational activation or repression. Functionally, (Microbial infection) In case of FCV infection, plays a role in the ribosomal termination-reinitiation event leading to the translation of VP2. The sequence is that of Eukaryotic translation initiation factor 3 subunit L from Homo sapiens (Human).